A 295-amino-acid chain; its full sequence is Acetylglutamate kinase (295 aa).

Residues 66-67 (GG), Arg-88, and Asn-193 contribute to the substrate site.

The protein belongs to the acetylglutamate kinase family. ArgB subfamily.

Its subcellular location is the cytoplasm. It catalyses the reaction N-acetyl-L-glutamate + ATP = N-acetyl-L-glutamyl 5-phosphate + ADP. It functions in the pathway amino-acid biosynthesis; L-arginine biosynthesis; N(2)-acetyl-L-ornithine from L-glutamate: step 2/4. Its function is as follows. Catalyzes the ATP-dependent phosphorylation of N-acetyl-L-glutamate. The chain is Acetylglutamate kinase from Rhizobium etli (strain ATCC 51251 / DSM 11541 / JCM 21823 / NBRC 15573 / CFN 42).